The following is a 422-amino-acid chain: Tyrosine--tRNA ligase (422 aa).

Tyr37 contributes to the L-tyrosine binding site. Positions 42-51 (PTEESLHIGH) match the 'HIGH' region motif. L-tyrosine is bound by residues Tyr175 and Gln179. The 'KMSKS' region signature appears at 235 to 239 (KFGKT). ATP is bound at residue Lys238. The S4 RNA-binding domain maps to 357-414 (KDLQEALVLTSLAQSRTQAKNMIISNSISINTEKIRKNHIFHEKDKLFGKFTLLSRGK).

It belongs to the class-I aminoacyl-tRNA synthetase family. TyrS type 1 subfamily. As to quaternary structure, homodimer.

It localises to the cytoplasm. The enzyme catalyses tRNA(Tyr) + L-tyrosine + ATP = L-tyrosyl-tRNA(Tyr) + AMP + diphosphate + H(+). In terms of biological role, catalyzes the attachment of tyrosine to tRNA(Tyr) in a two-step reaction: tyrosine is first activated by ATP to form Tyr-AMP and then transferred to the acceptor end of tRNA(Tyr). In Buchnera aphidicola subsp. Acyrthosiphon pisum (strain Tuc7), this protein is Tyrosine--tRNA ligase.